An 84-amino-acid polypeptide reads, in one-letter code: Exodeoxyribonuclease 7 small subunit (84 aa).

It belongs to the XseB family. As to quaternary structure, heterooligomer composed of large and small subunits.

The protein resides in the cytoplasm. It carries out the reaction Exonucleolytic cleavage in either 5'- to 3'- or 3'- to 5'-direction to yield nucleoside 5'-phosphates.. Functionally, bidirectionally degrades single-stranded DNA into large acid-insoluble oligonucleotides, which are then degraded further into small acid-soluble oligonucleotides. In Janthinobacterium sp. (strain Marseille) (Minibacterium massiliensis), this protein is Exodeoxyribonuclease 7 small subunit.